Consider the following 218-residue polypeptide: Peptidyl-prolyl cis-trans isomerase FKBP7 (218 aa).

The N-terminal stretch at 1-19 (MNLLFRLAVFLSLWCCSDA) is a signal peptide. Residues Asn-41 and Asn-128 are each glycosylated (N-linked (GlcNAc...) asparagine). In terms of domain architecture, PPIase FKBP-type spans 49–141 (GDLLNAHYDG…MFEIELYAVT (93 aa)). EF-hand domains are found at residues 141–176 (TKGPRSIETFKQIDTDNDRQLSKAEIELYLQKDFEK) and 185–218 (YQKAVLEDIFKKNDHNGDGFISPKEYNVHQHDEL). Asp-154, Asp-156, Asp-158, Gln-160, Glu-165, Asp-198, Asn-200, Asp-202, and Glu-209 together coordinate Ca(2+). The tract at residues 197 to 218 (NDHNGDGFISPKEYNVHQHDEL) is disordered. Residues 215-218 (HDEL) carry the Prevents secretion from ER motif.

In terms of processing, glycosylated. Expressed at highest levels in heart, lung and testis. Weakly expressed in kidney and lymph node. Little or no expression detected in brain, thymus, spleen and liver.

It localises to the endoplasmic reticulum lumen. The catalysed reaction is [protein]-peptidylproline (omega=180) = [protein]-peptidylproline (omega=0). Its function is as follows. PPIases accelerate the folding of proteins during protein synthesis. The chain is Peptidyl-prolyl cis-trans isomerase FKBP7 (Fkbp7) from Mus musculus (Mouse).